A 506-amino-acid chain; its full sequence is MGDRSEVPGPARPGPPGIGPEGPLGQLLRRHRSPSPTRGGQEPRRVRRRVLVQQEEEVVSGSPSGPRGDRSEVPGPARPGPPGIGPEGPLGQLLRRHRSPSPTRGGQEPRRVRRRVLVQQEEEVVSGSPSGPRGDRSEVPGPARPGPPGIGPEGPLGQLLRRHRSPSPTRGGQEPRRVRRRVLVQQEEEVVSGSPSGPRGDRSEVPGPARPGPPGIGPEGPLGQLLRRHRSPSPTRGGQEPRRVRRRVLVQQEEEVVSGSPSGPRGDRSEVPGPARPGPPGIGPEGPLGQLLRRHRSPSPTRGGQEPRRVRRRVLVQQEEEVVSGSPSGPRGDRSEVPGPARPGPPGIGPEGPLGQLLRRHRSPSPTRGGQEPRRVRRRVLVQQEEEVVSGSPSGPRGDRSEVPGPARPGPPGIGPEGPLGQLLRRHRSPSPTRGGQEPRRVRRRVLVQQEEEVVSGSPSGPLRPRPQPPAQSLREWLLRISERFDPHPVATRRQSVYIEEEEDED.

The tract at residues 1–471 (MGDRSEVPGP…PLRPRPQPPA (471 aa)) is disordered. Ser-35 is subject to Phosphoserine; by host.

This sequence belongs to the lymphocryptovirus EBNA-LP family. As to quaternary structure, homooligomer. Interacts with host SP100; this interaction is important for EBNA-LP coactivator activity. Interacts with host HAX1, ERR1 and HSPA2. Interacts with host PRKDC and AKAP8L; these interactions modulate the coactivator function of EBNA-LP. Post-translationally, phosphorylated by the cellular protein kinase cdc2.

It is found in the host nucleus. In terms of biological role, plays an important role in the establishment of B-cell immortalization by acting as an EBNA2 coactivator. This transcriptional activation preferentially enhances the expression of the major viral protein LMP1. The interaction between EBNA-LP and host SP100 correlates with coactivation of EBNA2 and the relocalization of SP100 from PML nuclear bodies into nucleoplasm. In Epstein-Barr virus (strain AG876) (HHV-4), this protein is Epstein-Barr nuclear antigen leader protein (EBNA-LP).